Consider the following 484-residue polypeptide: Cysteine--tRNA ligase (484 aa).

Cysteine 29 provides a ligand contact to Zn(2+). A 'HIGH' region motif is present at residues 31 to 41; that stretch reads PTVQSAPHIGH. The Zn(2+) site is built by cysteine 219, histidine 244, and glutamate 248. A 'KMSKS' region motif is present at residues 275 to 279; the sequence is KMSKS. Residue lysine 278 coordinates ATP.

It belongs to the class-I aminoacyl-tRNA synthetase family. In terms of assembly, monomer. It depends on Zn(2+) as a cofactor.

Its subcellular location is the cytoplasm. It carries out the reaction tRNA(Cys) + L-cysteine + ATP = L-cysteinyl-tRNA(Cys) + AMP + diphosphate. The polypeptide is Cysteine--tRNA ligase (Clavibacter michiganensis subsp. michiganensis (strain NCPPB 382)).